We begin with the raw amino-acid sequence, 160 residues long: Cytochrome b6-f complex subunit 4 (160 aa).

The next 3 helical transmembrane spans lie at 36 to 56 (LLYI…GLAV), 95 to 115 (LLGV…PFLE), and 131 to 151 (TVFL…TLPI).

The protein belongs to the cytochrome b family. PetD subfamily. The 4 large subunits of the cytochrome b6-f complex are cytochrome b6, subunit IV (17 kDa polypeptide, petD), cytochrome f and the Rieske protein, while the 4 small subunits are petG, petL, petM and petN. The complex functions as a dimer.

It is found in the plastid. The protein resides in the chloroplast thylakoid membrane. Its function is as follows. Component of the cytochrome b6-f complex, which mediates electron transfer between photosystem II (PSII) and photosystem I (PSI), cyclic electron flow around PSI, and state transitions. This chain is Cytochrome b6-f complex subunit 4, found in Solanum bulbocastanum (Wild potato).